A 451-amino-acid chain; its full sequence is Phosphoglucosamine mutase (451 aa).

The Phosphoserine intermediate role is filled by Ser107. Positions 107, 246, 248, and 250 each coordinate Mg(2+). At Ser107 the chain carries Phosphoserine.

It belongs to the phosphohexose mutase family. Mg(2+) is required as a cofactor. Post-translationally, activated by phosphorylation.

The enzyme catalyses alpha-D-glucosamine 1-phosphate = D-glucosamine 6-phosphate. Functionally, catalyzes the conversion of glucosamine-6-phosphate to glucosamine-1-phosphate. The sequence is that of Phosphoglucosamine mutase from Burkholderia multivorans (strain ATCC 17616 / 249).